Consider the following 246-residue polypeptide: MITLTDCSRRFQDKKKVVKAVRDVSLTIEKGEVVGILGENGAGKTTMLRMIASLLEPSQGVITVDGFDTVKQPAEVKQRIGVLFGGETGLYDRMTAKENLQYFGRLYGLNRHEIKARIEDLSKRFGMRDYMNRRVGGFSKGMRQKVAIARALIHDPDIILFDEPTTGLDITSSNIFREFIQQLKREQKTILFSSHIMEEVQALCDSVIMIHSGEVIYRGALESLYESERSEDLNYIFMSKLVRGIS.

The 236-residue stretch at 2–237 (ITLTDCSRRF…ERSEDLNYIF (236 aa)) folds into the ABC transporter domain. ATP is bound at residue 38–45 (GENGAGKT).

The protein belongs to the ABC transporter superfamily. The complex is composed of NatA and NatB.

It carries out the reaction Na(+)(in) + ATP + H2O = Na(+)(out) + ADP + phosphate + H(+). In terms of biological role, part of an ABC transporter that catalyzes ATP-dependent electrogenic sodium extrusion. The sequence is that of ABC transporter ATP-binding protein NatA from Bacillus subtilis (strain 168).